The sequence spans 38 residues: Large ribosomal subunit protein bL36 (38 aa).

This sequence belongs to the bacterial ribosomal protein bL36 family.

This Chloroflexus aurantiacus (strain ATCC 29366 / DSM 635 / J-10-fl) protein is Large ribosomal subunit protein bL36.